A 241-amino-acid polypeptide reads, in one-letter code: NLP effector protein 7 (241 aa).

The N-terminal stretch at 1–19 is a signal peptide; that stretch reads MHLCALLIAAAGVLASVRA. A Conserved undecapeptide motif motif is present at residues 105 to 115; the sequence is AIMYAWYFPKA. A Conserved heptapeptide motif motif is present at residues 125–131; sequence GSRHYWL. A glycan (N-linked (GlcNAc...) asparagine) is linked at N144.

It belongs to the Necrosis inducing protein (NPP1) family.

It localises to the secreted. In terms of biological role, secreted effector that acts as a pathogen-associated molecular pattern (PAMP) recognized by the plant immune system. Induces necrosis in Nicotiana benthamiana leaves and can induce Phytophthora capsici resistance in Nicotiana benthamiana. Also significantly improves disease resistance of Arabidopsis thaliana to Hyaloperonospora arabidopsidis. causes an inhibition of plant growth which is typically associated with enhanced immunity when over-expressed in Arabidopsis. The polypeptide is NLP effector protein 7 (Plasmopara viticola (Downy mildew of grapevine)).